Consider the following 60-residue polypeptide: Large ribosomal subunit protein uL30 (60 aa).

It belongs to the universal ribosomal protein uL30 family. Part of the 50S ribosomal subunit.

The polypeptide is Large ribosomal subunit protein uL30 (Desulforapulum autotrophicum (strain ATCC 43914 / DSM 3382 / VKM B-1955 / HRM2) (Desulfobacterium autotrophicum)).